A 163-amino-acid polypeptide reads, in one-letter code: Ribonuclease H (163 aa).

Residues 4 to 146 (SPKKVLIYTD…CDRLAVRASQ (143 aa)) enclose the RNase H type-1 domain. Residues Asp-13, Glu-51, Asp-73, and Asp-138 each coordinate Mg(2+).

Belongs to the RNase H family. As to quaternary structure, monomer. Mg(2+) serves as cofactor.

It localises to the cytoplasm. The catalysed reaction is Endonucleolytic cleavage to 5'-phosphomonoester.. In terms of biological role, endonuclease that specifically degrades the RNA of RNA-DNA hybrids. This chain is Ribonuclease H, found in Rippkaea orientalis (strain PCC 8801 / RF-1) (Cyanothece sp. (strain PCC 8801)).